Consider the following 687-residue polypeptide: Translation initiation factor IF-2 (687 aa).

The tr-type G domain maps to 186-355; the sequence is KRPPIVTVMG…LLTAEMLELK (170 aa). A G1 region spans residues 195-202; sequence GHVDHGKT. 195-202 is a GTP binding site; the sequence is GHVDHGKT. A G2 region spans residues 220–224; sequence GITQH. The tract at residues 241–244 is G3; the sequence is DTPG. GTP-binding positions include 241 to 245 and 295 to 298; these read DTPGH and NKID. Residues 295–298 form a G4 region; it reads NKID. Positions 331–333 are G5; it reads SAK.

The protein belongs to the TRAFAC class translation factor GTPase superfamily. Classic translation factor GTPase family. IF-2 subfamily.

It localises to the cytoplasm. In terms of biological role, one of the essential components for the initiation of protein synthesis. Protects formylmethionyl-tRNA from spontaneous hydrolysis and promotes its binding to the 30S ribosomal subunits. Also involved in the hydrolysis of GTP during the formation of the 70S ribosomal complex. The polypeptide is Translation initiation factor IF-2 (Clostridium botulinum (strain Eklund 17B / Type B)).